Reading from the N-terminus, the 1359-residue chain is MAEAGLRGWLLWALLLRLAQSEPYTTIHQPGYCAFYDECGKNPELSGSLMTLSNVSCLSNTPARKITGDHLILLQKICPRLYTGPNTQACCSAKQLVSLEASLSITKALLTRCPACSDNFVNLHCHNTCSPNQSLFINVTRVAQLGAGQLPAVVAYEAFYQHSFAEQSYDSCSRVRVPAAATLAVGTMCGVYGSALCNAQRWLNFQGDTGNGLAPLDITFHLLEPGQAVGSGIQPLNEGVARCNESQGDDVATCSCQDCAASCPAIARPQALDSTFYLGQMPGSLVLIIILCSVFAVVTILLVGFRVAPARDKSKMVDPKKGTSLSDKLSFSTHTLLGQFFQGWGTWVASWPLTILVLSVIPVVALAAGLVFTELTTDPVELWSAPNSQARSEKAFHDQHFGPFFRTNQVILTAPNRSSYRYDSLLLGPKNFSGILDLDLLLELLELQERLRHLQVWSPEAQRNISLQDICYAPLNPDNTSLYDCCINSLLQYFQNNRTLLLLTANQTLMGQTSQVDWKDHFLYCANAPLTFKDGTALALSCMADYGAPVFPFLAIGGYKGKDYSEAEALIMTFSLNNYPAGDPRLAQAKLWEEAFLEEMRAFQRRMAGMFQVTFMAERSLEDEINRTTAEDLPIFATSYIVIFLYISLALGSYSSWSRVMVDSKATLGLGGVAVVLGAVMAAMGFFSYLGIRSSLVILQVVPFLVLSVGADNIFIFVLEYQRLPRRPGEPREVHIGRALGRVAPSMLLCSLSEAICFFLGALTPMPAVRTFALTSGLAVILDFLLQMSAFVALLSLDSKRQEASRLDVCCCVKPQELPPPGQGEGLLLGFFQKAYAPFLLHWITRGVVLLLFLALFGVSLYSMCHISVGLDQELALPKDSYLLDYFLFLNRYFEVGAPVYFVTTLGYNFSSEAGMNAICSSAGCNNFSFTQKIQYATEFPEQSYLAIPASSWVDDFIDWLTPSSCCRLYISGPNKDKFCPSTVNSLNCLKNCMSITMGSVRPSVEQFHKYLPWFLNDRPNIKCPKGGLAAYSTSVNLTSDGQVLDTVAILSPRLEYSGTISAHCNLYLLDSTSRFMAYHKPLKNSQDYTEALRAARELAANITADLRKVPGTDPAFEVFPYTITNVFYEQYLTILPEGLFMLSLCLVPTFAVSCLLLGLDLRSGLLNLLSIVMILVDTVGFMALWGISYNAVSLINLVSAVGMSVEFVSHITRSFAISTKPTWLERAKEATISMGSAVFAGVAMTNLPGILVLGLAKAQLIQIFFFRLNLLITLLGLLHGLVFLPVILSYVGPDVNPALALEQKRAEEAVAAVMVASCPNHPSRVSTADNIYVNHSFEGSIKGAGAISNFLPNNGRQF.

A signal peptide spans 1 to 21 (MAEAGLRGWLLWALLLRLAQS). Over 22-284 (EPYTTIHQPG…TFYLGQMPGS (263 aa)) the chain is Extracellular. Disulfide bonds link C33-C90, C39-C57, C78-C125, C91-C129, C113-C254, C116-C172, C189-C197, C243-C259, and C256-C263. N-linked (GlcNAc...) asparagine glycosylation is present at N54. Residues N132 and N138 are each glycosylated (N-linked (GlcNAc...) asparagine). The N-linked (GlcNAc...) asparagine glycan is linked to N244. Residues 285–305 (LVLIIILCSVFAVVTILLVGF) form a helical membrane-spanning segment. Over 306-351 (RVAPARDKSKMVDPKKGTSLSDKLSFSTHTLLGQFFQGWGTWVASW) the chain is Cytoplasmic. The helical transmembrane segment at 352 to 372 (PLTILVLSVIPVVALAAGLVF) threads the bilayer. The Extracellular portion of the chain corresponds to 373 to 632 (TELTTDPVEL…DEINRTTAED (260 aa)). N416, N431, N464, N479, N497, and N506 each carry an N-linked (GlcNAc...) asparagine glycan. C471 and C485 are oxidised to a cystine. C525 and C542 are joined by a disulfide. N-linked (GlcNAc...) asparagine glycosylation occurs at N626. An SSD domain is found at 632 to 797 (DLPIFATSYI…MSAFVALLSL (166 aa)). A helical transmembrane segment spans residues 633–653 (LPIFATSYIVIFLYISLALGS). The Cytoplasmic segment spans residues 654–666 (YSSWSRVMVDSKA). A helical membrane pass occupies residues 667 to 687 (TLGLGGVAVVLGAVMAAMGFF). Over 688 to 696 (SYLGIRSSL) the chain is Extracellular. The chain crosses the membrane as a helical span at residues 697–717 (VILQVVPFLVLSVGADNIFIF). Over 718-742 (VLEYQRLPRRPGEPREVHIGRALGR) the chain is Cytoplasmic. A helical transmembrane segment spans residues 743–763 (VAPSMLLCSLSEAICFFLGAL). Over 764–776 (TPMPAVRTFALTS) the chain is Extracellular. A helical transmembrane segment spans residues 777 to 797 (GLAVILDFLLQMSAFVALLSL). Residues 798–846 (DSKRQEASRLDVCCCVKPQELPPPGQGEGLLLGFFQKAYAPFLLHWITR) are Cytoplasmic-facing. The helical transmembrane segment at 847–867 (GVVLLLFLALFGVSLYSMCHI) threads the bilayer. The Extracellular portion of the chain corresponds to 868 to 1139 (SVGLDQELAL…EQYLTILPEG (272 aa)). 3 disulfide bridges follow: C920–C925, C966–C1024, and C980–C989. Residues 1140 to 1160 (LFMLSLCLVPTFAVSCLLLGL) traverse the membrane as a helical segment. Residues 1161–1168 (DLRSGLLN) lie on the Cytoplasmic side of the membrane. Residues 1169-1189 (LLSIVMILVDTVGFMALWGIS) form a helical membrane-spanning segment. The Extracellular portion of the chain corresponds to 1190–1191 (YN). The helical transmembrane segment at 1192–1212 (AVSLINLVSAVGMSVEFVSHI) threads the bilayer. Residues 1213 to 1236 (TRSFAISTKPTWLERAKEATISMG) lie on the Cytoplasmic side of the membrane. The chain crosses the membrane as a helical span at residues 1237–1257 (SAVFAGVAMTNLPGILVLGLA). Over 1258–1268 (KAQLIQIFFFR) the chain is Extracellular. The chain crosses the membrane as a helical span at residues 1269–1289 (LNLLITLLGLLHGLVFLPVIL). The Cytoplasmic portion of the chain corresponds to 1290–1359 (SYVGPDVNPA…NFLPNNGRQF (70 aa)).

It belongs to the patched family. Interacts with RAB11A, MYO5B and RAB11FIP2. Interaction with RAB11A, MYO5B and RAB11FIP2 is required for proper transport to the plasma membrane upon cholesterol depletion. Interacts with NPC2. Interacts with LIMA1. Highly glycosylated. As to expression, widely expressed. Expressed in liver. Also expressed in small intestine, pancreas, kidney, lung, pancreas, spleen, heart, gall bladder, brain, testis, stomach and muscle.

It localises to the apical cell membrane. It is found in the cell membrane. The protein resides in the cytoplasmic vesicle membrane. It carries out the reaction cholesterol(in) = cholesterol(out). It catalyses the reaction sitosterol(out) = sitosterol(in). In terms of biological role, plays a major role in cholesterol homeostasis. Critical for the uptake of cholesterol across the plasma membrane of the intestinal enterocyte. Involved in plant sterol absorption, it transports sitosterol, although at lower rates than cholesterol. Is the direct molecular target of ezetimibe, a drug that inhibits cholesterol absorption and is approved for the treatment of hypercholesterolemia. May have a function in the transport of multiple lipids and their homeostasis, thereby influencing lipid metabolism regulation. May be involved in caveolin trafficking from the plasma membrane. In addition, acts as a negative regulator of NPC2 and down-regulates its expression and secretion by inhibiting its maturation and accelerating its degradation. In Homo sapiens (Human), this protein is NPC1-like intracellular cholesterol transporter 1.